Here is a 152-residue protein sequence, read N- to C-terminus: Calcium-binding protein SPEC 1A (152 aa).

EF-hand domains are found at residues 10 to 45, 46 to 81, 84 to 119, and 120 to 152; these read EEVT…TGKS, YTDK…QMVK, WKEE…SKPP, and MKRK…IKSC. Ca(2+) contacts are provided by Asp-23, Asp-25, Ser-27, Ser-29, Glu-34, Asp-59, Asp-61, Ser-63, Thr-65, Glu-70, Asp-97, Asp-99, Asn-101, Ser-103, Glu-108, Asp-133, Asn-135, Asp-137, Lys-139, and Glu-144. Positions 95-121 are disordered; sequence DMDKDGNGSLSPQELREALSASKPPMK.

Found in cell lineages giving rise to the aboral ectoderm, a squamous epithelium covering the surface of the late stage embryo and larva.

In terms of biological role, calcium-binding protein involved in larval development and metamorphosis. Likely to function as calcium buffers mediating the transport of calcium from the sea water to the blastocoel where calcium is required for skeleton formation. The sequence is that of Calcium-binding protein SPEC 1A (SPEC1) from Strongylocentrotus purpuratus (Purple sea urchin).